A 551-amino-acid chain; its full sequence is Probable CoA ligase CCL5 (551 aa).

ATP-binding positions include 204-212, 345-350, Asp431, 443-446, and Lys537; these read SSGTTGASK, QGYGLT, and VVDR. The interval 274–345 is SBD1; it reads EIHEMLSAIE…ENYPTVSILQ (72 aa). The tract at residues 346–410 is SBD2; sequence GYGLTESTGI…LRGPTIMKGY (65 aa).

Belongs to the ATP-dependent AMP-binding enzyme family. In terms of tissue distribution, mostly expressed at low levels in glandular trichomes (lupulin glands) after flowering, and, to a lower extent, in stems, leaves, cones and flowers.

The protein resides in the cytoplasm. It localises to the cytosol. The chain is Probable CoA ligase CCL5 from Humulus lupulus (European hop).